A 345-amino-acid chain; its full sequence is 1-aminocyclopropane-1-carboxylate oxidase homolog 7 (345 aa).

A Glycyl lysine isopeptide (Lys-Gly) (interchain with G-Cter in ubiquitin) cross-link involves residue lysine 16. Residues 194–293 (KGLHMICHYY…RISIACFFSS (100 aa)) form the Fe2OG dioxygenase domain. Residues histidine 218, aspartate 220, and histidine 274 each contribute to the Fe cation site. A 2-oxoglutarate-binding site is contributed by arginine 284.

It belongs to the iron/ascorbate-dependent oxidoreductase family. Requires Fe(2+) as cofactor.

This is 1-aminocyclopropane-1-carboxylate oxidase homolog 7 from Arabidopsis thaliana (Mouse-ear cress).